We begin with the raw amino-acid sequence, 753 residues long: Metal regulatory transcription factor 1 (753 aa).

The residue at position 2 (Gly2) is an N-acetylglycine. Ser5 carries the phosphoserine modification. The short motif at Lys133 to Lys138 is the Nuclear localization signal element. 6 consecutive C2H2-type zinc fingers follow at residues Tyr140–His164, Phe170–His194, Phe200–His224, Phe229–His253, Phe259–His283, and Phe289–His313. The residue at position 305 (Ser305) is a Phosphoserine. 3 disordered regions span residues Ser308 to Gly328, Glu395 to Gln466, and Ser648 to Met715. Residues Pro408–Leu417 are compositionally biased toward polar residues. The segment covering Ser655–Pro666 has biased composition (pro residues). The segment covering Ser679–Ser698 has biased composition (low complexity). Over residues Gln700 to Leu712 the composition is skewed to polar residues.

The protein localises to the nucleus. It is found in the cytoplasm. Its function is as follows. Zinc-dependent transcriptional regulator of cellular adaption to conditions of exposure to heavy metals. Binds to metal responsive elements (MRE) in promoters and activates the transcription of metallothionein genes like metallothionein-2/MT2A. Also regulates the expression of metalloproteases in response to intracellular zinc and functions as a catabolic regulator of cartilages. The sequence is that of Metal regulatory transcription factor 1 (MTF1) from Homo sapiens (Human).